An 88-amino-acid chain; its full sequence is Small ribosomal subunit protein uS15 (88 aa).

It belongs to the universal ribosomal protein uS15 family. As to quaternary structure, part of the 30S ribosomal subunit. Forms a bridge to the 50S subunit in the 70S ribosome, contacting the 23S rRNA.

One of the primary rRNA binding proteins, it binds directly to 16S rRNA where it helps nucleate assembly of the platform of the 30S subunit by binding and bridging several RNA helices of the 16S rRNA. In terms of biological role, forms an intersubunit bridge (bridge B4) with the 23S rRNA of the 50S subunit in the ribosome. The polypeptide is Small ribosomal subunit protein uS15 (Francisella tularensis subsp. novicida (strain U112)).